Here is an 826-residue protein sequence, read N- to C-terminus: Zinc phosphodiesterase ELAC protein 2 (826 aa).

A mitochondrion-targeting transit peptide spans 1–16 (MWALCSLLRSAAGRTM). Disordered regions lie at residues 16-51 (MSQG…PSGC) and 188-231 (EQRR…VSQR). Residues 27-38 (ARRERPRKDPLR) are compositionally biased toward basic and acidic residues. Phosphoserine occurs at positions 199, 208, 212, 229, 618, and 736. Basic and acidic residues predominate over residues 208–224 (SPERSSDSESNENEPHL). Positions 798–826 (ELAGGLEDGEPQQKRAHTEEPQAKKVRAQ) are disordered. Residues 808–820 (PQQKRAHTEEPQA) are compositionally biased toward basic and acidic residues.

Belongs to the RNase Z family. Homodimer. Interacts with PTCD1. Zn(2+) is required as a cofactor. In terms of tissue distribution, widely expressed. Highly expressed in heart, placenta, liver, skeletal muscle, kidney, pancreas, testis and ovary. Weakly expressed in brain, lung, spleen, thymus, prostate, small intestine, colon and leukocytes.

The protein localises to the mitochondrion. Its subcellular location is the mitochondrion matrix. It localises to the mitochondrion nucleoid. The protein resides in the nucleus. It catalyses the reaction Endonucleolytic cleavage of RNA, removing extra 3' nucleotides from tRNA precursor, generating 3' termini of tRNAs. A 3'-hydroxy group is left at the tRNA terminus and a 5'-phosphoryl group is left at the trailer molecule.. In terms of biological role, zinc phosphodiesterase, which displays mitochondrial tRNA 3'-processing endonuclease activity. Involved in tRNA maturation, by removing a 3'-trailer from precursor tRNA. Associates with mitochondrial DNA complexes at the nucleoids to initiate RNA processing and ribosome assembly. This chain is Zinc phosphodiesterase ELAC protein 2 (ELAC2), found in Homo sapiens (Human).